Reading from the N-terminus, the 225-residue chain is 7-carboxy-7-deazaguanine synthase (225 aa).

Substrate-binding positions include 12–14 (IQG) and Arg-27. Positions 18–225 (YIGVRQLFVR…PQVHKYLGVR (208 aa)) constitute a Radical SAM core domain. 3 residues coordinate [4Fe-4S] cluster: Cys-31, Cys-35, and Cys-38. Position 40 (Thr-40) interacts with Mg(2+). Thr-80 is a substrate binding site. S-adenosyl-L-methionine is bound at residue Gly-82.

This sequence belongs to the radical SAM superfamily. 7-carboxy-7-deazaguanine synthase family. In terms of assembly, homodimer. [4Fe-4S] cluster serves as cofactor. Requires S-adenosyl-L-methionine as cofactor. It depends on Mg(2+) as a cofactor.

It catalyses the reaction 6-carboxy-5,6,7,8-tetrahydropterin + H(+) = 7-carboxy-7-deazaguanine + NH4(+). Its pathway is purine metabolism; 7-cyano-7-deazaguanine biosynthesis. Catalyzes the complex heterocyclic radical-mediated conversion of 6-carboxy-5,6,7,8-tetrahydropterin (CPH4) to 7-carboxy-7-deazaguanine (CDG), a step common to the biosynthetic pathways of all 7-deazapurine-containing compounds. The protein is 7-carboxy-7-deazaguanine synthase of Archaeoglobus fulgidus (strain ATCC 49558 / DSM 4304 / JCM 9628 / NBRC 100126 / VC-16).